The sequence spans 1352 residues: Astrotactin-2 (1352 aa).

Residues 1-31 form a disordered region; it reads MAAAGARRSPGRGLGLRGRPRLGFHPGPPPP. An N-terminal signal peptide occupies residues 1–51; it reads MAAAGARRSPGRGLGLRGRPRLGFHPGPPPPPPPPLLLLFLLLLPPPPLLA. The Lumenal segment spans residues 52 to 218; sequence GATAAAASRE…IVEEQMHILH (167 aa). Asparagine 180 carries N-linked (GlcNAc...) asparagine glycosylation. The helical transmembrane segment at 219 to 239 threads the bilayer; sequence ISVMGGLIALLLLLLVFTVAL. At 240-447 the chain is on the cytoplasmic side; that stretch reads YAQRRWQKRR…KGLLKSPVNK (208 aa). 2 disordered regions span residues 308-327 and 375-421; these read EEEE…DEFG and TPVE…ADDE. Residues 383 to 392 show a composition bias toward polar residues; it reads QPASRSSTSA. A helical membrane pass occupies residues 448-468; it reads TALTLIAVSSCILAMVCGNQM. Residues 469–1352 are Lumenal-facing; the sequence is SCPLTVKVTL…RNTYGETKGR (884 aa). 3 EGF-like domains span residues 523–563, 664–708, and 712–764; these read VRDL…HLCV, PVRD…SGCY, and KGID…KSCL. 9 disulfides stabilise this stretch: cysteine 527–cysteine 539, cysteine 535–cysteine 546, cysteine 548–cysteine 562, cysteine 668–cysteine 681, cysteine 675–cysteine 692, cysteine 694–cysteine 707, cysteine 716–cysteine 728, cysteine 724–cysteine 748, and cysteine 750–cysteine 763. Asparagine 796 carries N-linked (GlcNAc...) asparagine glycosylation. 3 cysteine pairs are disulfide-bonded: cysteine 838/cysteine 1000, cysteine 929/cysteine 990, and cysteine 996/cysteine 1003. An N-linked (GlcNAc...) asparagine glycan is attached at asparagine 1033. 5 disulfides stabilise this stretch: cysteine 1049–cysteine 1060, cysteine 1062–cysteine 1075, cysteine 1149–cysteine 1171, cysteine 1203–cysteine 1290, and cysteine 1311–cysteine 1334. The Fibronectin type-III domain occupies 1079 to 1201; that stretch reads PQPVLRLSPT…SELSTVTLRT (123 aa).

It belongs to the astrotactin family. In terms of assembly, interacts with ASTN1; the interaction is not calcium-dependent. In terms of tissue distribution, detected in cerebellum granule neurons; not detected in astroglia (at protein level). Detected primarily in cerebellum, and at lower levels in brain cortex, olfactory bulb, hindbrain and hippocampus dentate gyrus. Between 6 and 10 days after birth, when granule cell migration occurs in the cerebellum, detected in granule cell precursors in the external germinal layer, the molecular layer, the internal granule layer and in Purkinje neurons. Detected in postmitotic neurons in adult cerebellum.

Its subcellular location is the membrane. It localises to the perikaryon. The protein resides in the cytoplasm. The protein localises to the cell cortex. It is found in the early endosome. Its subcellular location is the late endosome. It localises to the cytoplasmic vesicle. The protein resides in the clathrin-coated vesicle. In terms of biological role, mediates recycling of the neuronal cell adhesion molecule ASTN1 to the anterior pole of the cell membrane in migrating neurons. Promotes ASTN1 internalization and intracellular transport of endocytosed ASTN1. Selectively binds inositol-4,5-bisphosphate, inositol-3,4,5-trisphosphate and inositol-1,3,4,5-tetrakisphosphate, suggesting it is recruited to membranes that contain lipids with a phosphoinositide headgroup. This Mus musculus (Mouse) protein is Astrotactin-2 (Astn2).